We begin with the raw amino-acid sequence, 184 residues long: Ribosome-recycling factor (184 aa).

Belongs to the RRF family.

It is found in the cytoplasm. Its function is as follows. Responsible for the release of ribosomes from messenger RNA at the termination of protein biosynthesis. May increase the efficiency of translation by recycling ribosomes from one round of translation to another. The chain is Ribosome-recycling factor from Mycoplasma pneumoniae (strain ATCC 29342 / M129 / Subtype 1) (Mycoplasmoides pneumoniae).